Here is a 169-residue protein sequence, read N- to C-terminus: Transcription antitermination protein NusB (169 aa).

Residues 150 to 169 (AAATSRRTETAGGESNDAGS) are disordered.

The protein belongs to the NusB family.

Functionally, involved in transcription antitermination. Required for transcription of ribosomal RNA (rRNA) genes. Binds specifically to the boxA antiterminator sequence of the ribosomal RNA (rrn) operons. The polypeptide is Transcription antitermination protein NusB (Rhodococcus jostii (strain RHA1)).